Here is a 1169-residue protein sequence, read N- to C-terminus: Translation initiation factor IF-2 (1169 aa).

Disordered regions lie at residues 69-108 (IKAK…PLLI) and 139-568 (ALSK…LRAA). 2 stretches are compositionally biased toward basic and acidic residues: residues 71-83 (AKNE…DNKN) and 92-102 (HPEKLSKEGLN). Polar residues predominate over residues 139–156 (ALSKNQNKTNTSVITTPN). The span at 157 to 171 (LKDKKNPSALQDKKP) shows a compositional bias: basic and acidic residues. Low complexity predominate over residues 196-214 (NLANSNRNINANKINNSVN). The span at 231–248 (ADNNNFPKKNLNSPNVKS) shows a compositional bias: polar residues. Residues 265–281 (NTNRPNSNSRQPSSNTQ) are compositionally biased toward low complexity. Polar residues-rich tracts occupy residues 282–294 (ISAN…NRQG), 412–432 (MQLQ…NVNK), and 439–455 (NQKT…SPSP). Over residues 472–486 (GRTDWDDSAKLEALR) the composition is skewed to basic and acidic residues. Basic residues predominate over residues 544–560 (KQFKKKKKETTRQRQKR). One can recognise a tr-type G domain in the interval 661–838 (KRPPVITVMG…EVEDLQANPE (178 aa)). A G1 region spans residues 670–677 (GHVDHGKT). A GTP-binding site is contributed by 670–677 (GHVDHGKT). The G2 stretch occupies residues 695–699 (GITQH). Positions 720-723 (DTPG) are G3. Residues 720 to 724 (DTPGH) and 774 to 777 (NKID) contribute to the GTP site. Residues 774–777 (NKID) are G4. The interval 810–812 (SAI) is G5.

It belongs to the TRAFAC class translation factor GTPase superfamily. Classic translation factor GTPase family. IF-2 subfamily.

The protein localises to the cytoplasm. Its function is as follows. One of the essential components for the initiation of protein synthesis. Protects formylmethionyl-tRNA from spontaneous hydrolysis and promotes its binding to the 30S ribosomal subunits. Also involved in the hydrolysis of GTP during the formation of the 70S ribosomal complex. This is Translation initiation factor IF-2 from Prochlorococcus marinus subsp. pastoris (strain CCMP1986 / NIES-2087 / MED4).